The following is a 194-amino-acid chain: Imidazoleglycerol-phosphate dehydratase (194 aa).

This sequence belongs to the imidazoleglycerol-phosphate dehydratase family.

The protein resides in the cytoplasm. It carries out the reaction D-erythro-1-(imidazol-4-yl)glycerol 3-phosphate = 3-(imidazol-4-yl)-2-oxopropyl phosphate + H2O. Its pathway is amino-acid biosynthesis; L-histidine biosynthesis; L-histidine from 5-phospho-alpha-D-ribose 1-diphosphate: step 6/9. This chain is Imidazoleglycerol-phosphate dehydratase, found in Lacticaseibacillus casei (strain BL23) (Lactobacillus casei).